A 528-amino-acid polypeptide reads, in one-letter code: GMP synthase [glutamine-hydrolyzing] (528 aa).

The 192-residue stretch at 13–204 folds into the Glutamine amidotransferase type-1 domain; that stretch reads AIVILDFGSQ…VYDICSCEPD (192 aa). Residue Cys-90 is the Nucleophile of the active site. Residues His-178 and Glu-180 contribute to the active site. A GMPS ATP-PPase domain is found at 205-403; the sequence is WTTNLFIDEA…LGLPDEIVRR (199 aa). 232–238 is an ATP binding site; it reads SGGVDSS.

As to quaternary structure, homodimer.

The catalysed reaction is XMP + L-glutamine + ATP + H2O = GMP + L-glutamate + AMP + diphosphate + 2 H(+). Its pathway is purine metabolism; GMP biosynthesis; GMP from XMP (L-Gln route): step 1/1. In terms of biological role, catalyzes the synthesis of GMP from XMP. This is GMP synthase [glutamine-hydrolyzing] from Prochlorococcus marinus (strain NATL2A).